Reading from the N-terminus, the 335-residue chain is Biotin synthase (335 aa).

Positions 50–279 constitute a Radical SAM core domain; the sequence is ADIQRAALLS…KARVRLSAGR (230 aa). [4Fe-4S] cluster contacts are provided by Cys65, Cys69, and Cys72. [2Fe-2S] cluster-binding residues include Cys110, Cys142, Cys202, and Arg274.

This sequence belongs to the radical SAM superfamily. Biotin synthase family. In terms of assembly, homodimer. It depends on [4Fe-4S] cluster as a cofactor. [2Fe-2S] cluster is required as a cofactor.

It carries out the reaction (4R,5S)-dethiobiotin + (sulfur carrier)-SH + 2 reduced [2Fe-2S]-[ferredoxin] + 2 S-adenosyl-L-methionine = (sulfur carrier)-H + biotin + 2 5'-deoxyadenosine + 2 L-methionine + 2 oxidized [2Fe-2S]-[ferredoxin]. It functions in the pathway cofactor biosynthesis; biotin biosynthesis; biotin from 7,8-diaminononanoate: step 2/2. In terms of biological role, catalyzes the conversion of dethiobiotin (DTB) to biotin by the insertion of a sulfur atom into dethiobiotin via a radical-based mechanism. This chain is Biotin synthase, found in Methylorubrum extorquens (strain CM4 / NCIMB 13688) (Methylobacterium extorquens).